The following is a 229-amino-acid chain: Interleukin-22 receptor subunit alpha-2 (229 aa).

The signal sequence occupies residues 1–19; it reads MPKHCFLGLLIMLLTTATE. 2 Fibronectin type-III domains span residues 28-127 and 128-229; these read KPQK…TKLD and PPVV…VQIP. N54 is a glycosylation site (N-linked (GlcNAc...) asparagine). Intrachain disulfides connect C76/C84 and C204/C225.

This sequence belongs to the type II cytokine receptor family.

The protein resides in the secreted. Receptor for IL22. Binds to IL22, prevents interaction with the functional IL-22R complex and blocks the activity of IL22 (in vitro). May play an important role as an IL22 antagonist in the regulation of inflammatory responses. The protein is Interleukin-22 receptor subunit alpha-2 (Il22ra2) of Rattus norvegicus (Rat).